A 147-amino-acid chain; its full sequence is Large ribosomal subunit protein uL15 (147 aa).

The disordered stretch occupies residues 1–54 (MRLSDIKPTPGSMKKRTRVGRGIGSGKGKTSGKGHKGQKARGRGKVHPWFEGGQ). A compositionally biased stretch (basic residues) spans 30–46 (TSGKGHKGQKARGRGKV).

It belongs to the universal ribosomal protein uL15 family. Part of the 50S ribosomal subunit.

Functionally, binds to the 23S rRNA. This Thermosipho melanesiensis (strain DSM 12029 / CIP 104789 / BI429) protein is Large ribosomal subunit protein uL15.